Reading from the N-terminus, the 442-residue chain is tRNA modification GTPase MnmE (442 aa).

The (6S)-5-formyl-5,6,7,8-tetrahydrofolate site is built by R24, E82, and K120. A TrmE-type G domain is found at 217–367 (GLHIVITGEP…LISLIKKKAE (151 aa)). GTP contacts are provided by residues 227-232 (NVGKST), 246-252 (SEYAGTT), and 271-274 (DTAG). Position 231 (S231) interacts with Mg(2+). S246 serves as a coordination point for K(+). T252 contributes to the Mg(2+) binding site. K442 is a (6S)-5-formyl-5,6,7,8-tetrahydrofolate binding site.

The protein belongs to the TRAFAC class TrmE-Era-EngA-EngB-Septin-like GTPase superfamily. TrmE GTPase family. Homodimer. Heterotetramer of two MnmE and two MnmG subunits. The cofactor is K(+).

The protein resides in the cytoplasm. In terms of biological role, exhibits a very high intrinsic GTPase hydrolysis rate. Involved in the addition of a carboxymethylaminomethyl (cmnm) group at the wobble position (U34) of certain tRNAs, forming tRNA-cmnm(5)s(2)U34. The protein is tRNA modification GTPase MnmE of Wolbachia pipientis subsp. Culex pipiens (strain wPip).